We begin with the raw amino-acid sequence, 396 residues long: Period circadian protein (396 aa).

4 disordered regions span residues 27–120, 167–188, 253–275, and 333–362; these read VTAP…APPV, SGPG…WEGE, GGNG…QYTQ, and SPSS…TSQA. Gly residues predominate over residues 93-114; sequence GTSGTGNSGDGGGGGGANGTGS. Over residues 253 to 262 the composition is skewed to gly residues; it reads GGNGNVGSGN. Positions 333–342 are enriched in low complexity; sequence SPSSTNTNPN.

In terms of assembly, forms a heterodimer with timeless (TIM); the complex then translocates into the nucleus. Phosphorylated with a circadian rhythmicity, probably by the double-time protein (dbt). Phosphorylation could be implicated in the stability of per monomer and in the formation of heterodimer per-tim.

It localises to the nucleus. Its subcellular location is the cytoplasm. The protein resides in the perinuclear region. In terms of biological role, essential for biological clock functions. Determines the period length of circadian and ultradian rhythms; an increase in PER dosage leads to shortened circadian rhythms and a decrease leads to lengthened circadian rhythms. Essential for the circadian rhythmicity of locomotor activity, eclosion behavior, and for the rhythmic component of the male courtship song that originates in the thoracic nervous system. The biological cycle depends on the rhythmic formation and nuclear localization of the TIM-PER complex. Light induces the degradation of TIM, which promotes elimination of PER. Nuclear activity of the heterodimer coordinatively regulates PER and TIM transcription through a negative feedback loop. Behaves as a negative element in circadian transcriptional loop. Does not appear to bind DNA, suggesting indirect transcriptional inhibition. The chain is Period circadian protein (per) from Drosophila paulistorum (Fruit fly).